A 170-amino-acid chain; its full sequence is Transcription factor E (170 aa).

The 93-residue stretch at 1–93 (MKEAYLYIVE…TWYVDDEIIR (93 aa)) folds into the HTH TFE/IIEalpha-type domain.

This sequence belongs to the TFE family. As to quaternary structure, monomer. Interaction with RNA polymerase subunits RpoF and RpoE is necessary for Tfe stimulatory transcription activity. Able to interact with Tbp and RNA polymerase in the absence of DNA promoter. Interacts both with the preinitiation and elongation complexes.

In terms of biological role, transcription factor that plays a role in the activation of archaeal genes transcribed by RNA polymerase. Facilitates transcription initiation by enhancing TATA-box recognition by TATA-box-binding protein (Tbp), and transcription factor B (Tfb) and RNA polymerase recruitment. Not absolutely required for transcription in vitro, but particularly important in cases where Tbp or Tfb function is not optimal. It dynamically alters the nucleic acid-binding properties of RNA polymerases by stabilizing the initiation complex and destabilizing elongation complexes. Seems to translocate with the RNA polymerase following initiation and acts by binding to the non template strand of the transcription bubble in elongation complexes. This chain is Transcription factor E, found in Pyrobaculum islandicum (strain DSM 4184 / JCM 9189 / GEO3).